The sequence spans 488 residues: Type II restriction enzyme HgaI (488 aa).

It catalyses the reaction Endonucleolytic cleavage of DNA to give specific double-stranded fragments with terminal 5'-phosphates.. In terms of biological role, an S subtype restriction enzyme that recognizes the double-stranded sequences 5'-GACGC-3' and 5'-GCGTC-3' and cleaves respectively 10 bases after G-1 and 10 bases before G'-1. This Avibacterium volantium (Pasteurella volantium) protein is Type II restriction enzyme HgaI (hgaIR).